The following is a 387-amino-acid chain: Tetratricopeptide repeat protein 4 (387 aa).

N-acetylmethionine is present on methionine 1. Residues serine 47 and serine 51 each carry the phosphoserine modification. TPR repeat units follow at residues 79–112, 117–150, and 151–184; these read AKTY…KCAD, AVLY…KPCH, and LKAI…DAKE. A Phosphoserine modification is found at serine 243.

It belongs to the TTC4 family. Interacts (via TPR repeats) with HSP90AB1. Interacts with HSPA8 and CDC6. Interacts with TBK1. Interacts with MSL1. As to expression, highly expressed in proliferating tissue and tumor cell lines but not in normal cell lines.

The protein resides in the nucleus. Its subcellular location is the nucleoplasm. It localises to the cytoplasm. In terms of biological role, may act as a co-chaperone for HSP90AB1. Promotes Sendai virus (SeV)-induced host cell innate immune responses. The protein is Tetratricopeptide repeat protein 4 (TTC4) of Homo sapiens (Human).